The chain runs to 1341 residues: MMNRTTPDQELAPASEPVWERPWSVEEIRRSSQSWSLAADAGLLQFLQEFSQQTISRTHEIKKQVDGLIRETKATDCRLHNVFNDFLMLSNTQFIENRVYDEEVEEPVLKAEAEKTEQEKTREQKEVDLIPKVQEAVNYGLQVLDSAFEQLDIKAGNSDSEEDDANGRVELILEPKDLYIDRPLPYLIGSKLFMEQEDVGLGELSSEEGSVGSDRGSIVDTEEEKEEEESDEDFAHHSDNEQNRHTTQMSDEEEDDDGCDLFADSEKEEEDIEDIEENTRPKRSRPTSFADELAARIKGDAVGRVDEEPTTLPSGEAKPRKTLKEKKERRTPSDDEEDNLFAPPKLTDEDFSPFGSGGGLFSGGKGLFDDEDEESDLFTEAPQDRQAGASVKEESSSSKPGKKIPAGAVSVFLGDTDVFGAASVPSMKEPQKPEQPTPRKSPYGPPPTGLFDDDDGDDDDDFFSAPHSKPSKTGKVQSTADIFGDEEGDLFKEKAVASPEATVSQTDENKARAEKKVTLSSSKNLKPSSETKTQKGLFSDEEDSEDLFSSQSASKLKGASLLPGKLPTLVSLFDDEDEEDNLFGGTAAKKQTLCLQAQREEKAKASELSKKKASALLFSSDEEDQWNIPASQTHLASDSRSKGEPRDSGTLQSQEAKAVKKTSLFEEDEEDDLFAIAKDSQKKTQRVSLLFEDDVDSGGSLFGSPPTSVPPATKKKETVSEAPPLLFSDEEEKEAQLGVKSVDKKVESAKESLKFGRTDVAESEKEGLLTRSAQETVKHSDLFSSSSPWDKGTKPRTKTVLSLFDEEEDKMEDQNIIQAPQKEVGKGRDPDAHPKSTGVFQDEELLFSHKLQKDNDPDVDLFAGTKKTKLLEPSVGSLFGDDEDDDLFSSAKSQPLVQEKKRVVKKDHSVDSFKNQKHPESIQGSKEKGIWKPETPQDSSGLAPFKTKEPSTRIGKIQANLAINPAALLPTAASQISEVKPVLPELAFPSSEHRRSHGLESVPVLPGSGEAGVSFDLPAQADTLHSANKSRVKMRGKRRPQTRAARRLAAQESSETEDMSVPRGPIAQWADGAISPNGHRPQLRAASGEDSTEEALAAAAAPWEGGPVPGVDRSPFAKSLGHSRGEADLFDSGDIFSTGTGSQSVERTKPKAKIAENPANPPVGGKAKSPMFPALGEASSDDDLFQSAKPKPAKKTNPFPLLEDEDDLFTDQKVKKNETKSNSQQDVILTTQDIFEDDIFATEAIKPSQKTREKEKTLESNLFDDNIDIFADLTVKPKEKSKKKVEAKSIFDDDMDDIFSSGIQAKTTKPKSRSAQAAPEPRFEHKVSNIFDDPLNAFGGQ.

The tract at residues 1-220 (MMNRTTPDQE…VGSDRGSIVD (220 aa)) is sufficient for interaction with WASHC3, WASHC4 and WASHC5; required for interaction with WASHC1. Residues 202-214 (GELSSEEGSVGSD) are compositionally biased toward low complexity. Residues 202–405 (GELSSEEGSV…SSSKPGKKIP (204 aa)) are disordered. Acidic residues predominate over residues 220–232 (DTEEEKEEEESDE). A compositionally biased stretch (basic and acidic residues) spans 233 to 244 (DFAHHSDNEQNR). Acidic residues-rich tracts occupy residues 250 to 259 (SDEEEDDDGC) and 266 to 276 (EKEEEDIEDIE). The span at 293–307 (LAARIKGDAVGRVDE) shows a compositional bias: basic and acidic residues. The segment covering 355-366 (GSGGGLFSGGKG) has biased composition (gly residues). The sufficient for interaction with CCDC93 stretch occupies residues 356–600 (SGGGLFSGGK…QTLCLQAQRE (245 aa)). Residues 356-742 (SGGGLFSGGK…KEAQLGVKSV (387 aa)) form a required for interaction with CCDC22 and VPS35L region. The segment at 357–1341 (GGGLFSGGKG…DDPLNAFGGQ (985 aa)) is interaction with VPS35. 4 short sequence motifs (LFa) span residues 367-378 (LFDDEDEESDLF), 411-419 (VFLGDTDVF), 450-463 (LFDDDDGDDDDDFF), and 482-491 (IFGDEEGDLF). Residues 422–554 (ASVPSMKEPQ…EDLFSSQSAS (133 aa)) are disordered. Residues 451–462 (FDDDDGDDDDDF) are compositionally biased toward acidic residues. Basic and acidic residues predominate over residues 507–517 (DENKARAEKKV). Positions 518–536 (TLSSSKNLKPSSETKTQKG) are enriched in polar residues. Short sequence motifs (LFa) lie at residues 537-548 (LFSDEEDSEDLF), 572-583 (LFDDEDEEDNLF), and 617-629 (LFSSDEEDQWNIP). At Ser539 the chain carries Phosphoserine. 3 disordered regions span residues 621-664 (DEED…KTSL), 696-739 (DSGG…QLGV), and 751-838 (ESLK…KSTG). The segment covering 637–647 (SDSRSKGEPRD) has biased composition (basic and acidic residues). 3 short sequence motifs (LFa) span residues 664 to 674 (LFEEDEEDDLF), 690 to 702 (LFEDDVDSGGSLF), and 726 to 738 (LFSDEEEKEAQLG). A compositionally biased stretch (basic and acidic residues) spans 751 to 768 (ESLKFGRTDVAESEKEGL). The short motif at 803 to 817 (LFDEEEDKMEDQNII) is the LFa 11 element. Over residues 823–834 (EVGKGRDPDAHP) the composition is skewed to basic and acidic residues. 3 short sequence motifs (LFa) span residues 839-847 (VFQDEELLF), 856-862 (DPDVDLF), and 878-888 (LFGDDEDDDLF). 2 disordered regions span residues 881 to 951 (DDED…KEPS) and 988 to 1205 (FPSS…LEDE). Composition is skewed to basic and acidic residues over residues 898–911 (QEKKRVVKKDHSVD) and 917–931 (KHPESIQGSKEKGIW). Residues 937 to 1341 (QDSSGLAPFK…DDPLNAFGGQ (405 aa)) are interaction with phospholipids. Residues 1028 to 1046 (NKSRVKMRGKRRPQTRAAR) are compositionally biased toward basic residues. Positions 1029-1047 (KSRVKMRGKRRPQTRAARR) are required for interaction with F-actin-capping protein subunit alpha (CAPZA1 or CAPZA2 or CAPZA3). 2 positions are modified to phosphoserine: Ser1054 and Ser1087. The span at 1094-1110 (EALAAAAAPWEGGPVPG) shows a compositional bias: low complexity. Ser1114 carries the phosphoserine modification. 6 consecutive short sequence motifs (LFa) follow at residues 1129-1136 (LFDSGDIF), 1171-1185 (MFPALGEASSDDDLF), 1201-1209 (LLEDEDDLF), 1234-1240 (IFEDDIF), 1262-1270 (LFDDNIDIF), and 1290-1299 (IFDDDMDDIF). The span at 1135–1145 (IFSTGTGSQSV) shows a compositional bias: polar residues. A disordered region spans residues 1302–1326 (GIQAKTTKPKSRSAQAAPEPRFEHK). The LFa 21 signature appears at 1330–1338 (IFDDPLNAF).

The protein belongs to the FAM21 family. Component of the WASH core complex also described as WASH regulatory complex (SHRC) composed of WASH (WASHC1, WASH2P or WASH3P), WASHC2 (WASHC2A or WASHC2C), WASHC3, WASHC4 and WASHC5; in the complex interacts (via N-terminus) directly with WASHC1. The WASH core complex associates with the F-actin-capping protein dimer (formed by CAPZA1, CAPZA2 or CAPZA3 and CAPZB) in a transient or substoichiometric manner which was initially described as WASH complex. Interacts with VPS35; mediates the association with the retromer CSC complex. Interacts with FKBP15. Interacts with CCDC93, CCDC22, VPS35L; indicative for an association of the WASH core complex with the CCC and retriever complexes. Directly interacts with TBC1D23.

The protein resides in the early endosome membrane. Its subcellular location is the cell membrane. Functionally, acts at least in part as component of the WASH core complex whose assembly at the surface of endosomes inhibits WASH nucleation-promoting factor (NPF) activity in recruiting and activating the Arp2/3 complex to induce actin polymerization and is involved in the fission of tubules that serve as transport intermediates during endosome sorting. Mediates the recruitment of the WASH core complex to endosome membranes via binding to phospholipids and VPS35 of the retromer CSC. Mediates the recruitment of the F-actin-capping protein dimer to the WASH core complex probably promoting localized F-actin polymerization needed for vesicle scission. Via its C-terminus binds various phospholipids, most strongly phosphatidylinositol 4-phosphate (PtdIns-(4)P), phosphatidylinositol 5-phosphate (PtdIns-(5)P) and phosphatidylinositol 3,5-bisphosphate (PtdIns-(3,5)P2). Involved in the endosome-to-plasma membrane trafficking and recycling of SNX27-retromer-dependent cargo proteins, such as GLUT1. Required for the association of DNAJC13, ENTR1, ANKRD50 with retromer CSC subunit VPS35. Required for the endosomal recruitment of CCC complex subunits COMMD1 and CCDC93 as well as the retriever complex subunit VPS35L. The polypeptide is WASH complex subunit 2A (Homo sapiens (Human)).